Here is a 297-residue protein sequence, read N- to C-terminus: N-acetylmuramic acid 6-phosphate etherase (297 aa).

One can recognise an SIS domain in the interval 55–218; the sequence is ITKHFKQGGR…STGAMVGIGK (164 aa). Glu83 serves as the catalytic Proton donor. Residue Glu114 is part of the active site.

Belongs to the GCKR-like family. MurNAc-6-P etherase subfamily. In terms of assembly, homodimer.

It catalyses the reaction N-acetyl-D-muramate 6-phosphate + H2O = N-acetyl-D-glucosamine 6-phosphate + (R)-lactate. The protein operates within amino-sugar metabolism; N-acetylmuramate degradation. Functionally, specifically catalyzes the cleavage of the D-lactyl ether substituent of MurNAc 6-phosphate, producing GlcNAc 6-phosphate and D-lactate. This is N-acetylmuramic acid 6-phosphate etherase from Oenococcus oeni (strain ATCC BAA-331 / PSU-1).